The primary structure comprises 759 residues: Nucleolar RNA helicase 2-A (759 aa).

A disordered region spans residues 1–154 (MPVKVYAEEM…KKRKTDTTEI (154 aa)). The segment covering 77–86 (ETAEECDGEQ) has biased composition (acidic residues). The Q motif motif lies at 179-207 (GDFSKFPLSKETIKNLQAKGVSYLFPIQS). One can recognise a Helicase ATP-binding domain in the interval 210 to 389 (FHTAYSGKDV…KKYMRKQFEK (180 aa)). 223–230 (ARTGTGKT) is an ATP binding site. The DEAD box signature appears at 332–335 (DEVD). The region spanning 422–566 (DLVQVYSGSH…VGVPSLLNVA (145 aa)) is the Helicase C-terminal domain. The tract at residues 709–759 (QESERNFDGPRNRGFGGRGRRPFDRRNNSRNSNRGGGGRGRNRNGGFRRGR) is disordered. Over residues 710–719 (ESERNFDGPR) the composition is skewed to basic and acidic residues. Basic residues predominate over residues 748–759 (GRNRNGGFRRGR).

The protein belongs to the DEAD box helicase family. DDX21/DDX50 subfamily. In terms of tissue distribution, widely expressed. Expressed at higher level in stomach. Expressed at higher level compared to ddx21-b.

Its subcellular location is the nucleus. The protein localises to the nucleolus. It localises to the nucleoplasm. The protein resides in the cytoplasm. It is found in the cytosol. Its subcellular location is the mitochondrion. It catalyses the reaction ATP + H2O = ADP + phosphate + H(+). Its function is as follows. RNA helicase that acts as a sensor of the transcriptional status of both RNA polymerase (Pol) I and II: promotes ribosomal RNA (rRNA) processing and transcription from polymerase II (Pol II). Binds various RNAs, such as rRNAs, snoRNAs, 7SK and, at lower extent, mRNAs. In the nucleolus, localizes to rDNA locus, where it directly binds rRNAs and snoRNAs, and promotes rRNA transcription, processing and modification. Required for rRNA 2'-O-methylation, possibly by promoting the recruitment of late-acting snoRNAs SNORD56 and SNORD58 with pre-ribosomal complexes. In the nucleoplasm, binds 7SK RNA and is recruited to the promoters of Pol II-transcribed genes: acts by facilitating the release of P-TEFb from inhibitory 7SK snRNP in a manner that is dependent on its helicase activity, thereby promoting transcription of its target genes. Required to prevent R-loop-associated DNA damage and transcription-associated genomic instability. The chain is Nucleolar RNA helicase 2-A (ddx21-a) from Xenopus laevis (African clawed frog).